The chain runs to 229 residues: 2-C-methyl-D-erythritol 4-phosphate cytidylyltransferase (229 aa).

Belongs to the IspD/TarI cytidylyltransferase family. IspD subfamily.

The catalysed reaction is 2-C-methyl-D-erythritol 4-phosphate + CTP + H(+) = 4-CDP-2-C-methyl-D-erythritol + diphosphate. Its pathway is isoprenoid biosynthesis; isopentenyl diphosphate biosynthesis via DXP pathway; isopentenyl diphosphate from 1-deoxy-D-xylulose 5-phosphate: step 2/6. Functionally, catalyzes the formation of 4-diphosphocytidyl-2-C-methyl-D-erythritol from CTP and 2-C-methyl-D-erythritol 4-phosphate (MEP). This chain is 2-C-methyl-D-erythritol 4-phosphate cytidylyltransferase, found in Clostridium acetobutylicum (strain ATCC 824 / DSM 792 / JCM 1419 / IAM 19013 / LMG 5710 / NBRC 13948 / NRRL B-527 / VKM B-1787 / 2291 / W).